A 142-amino-acid chain; its full sequence is Hemoglobin A subunit alpha-2 (142 aa).

Residues 2 to 142 enclose the Globin domain; it reads VLTAGDKANV…VAQNLTSKYR (141 aa). Position 59 (histidine 59) interacts with O2. Position 88 (histidine 88) interacts with heme b.

The protein belongs to the globin family. In terms of assembly, tetramer of alpha-1, alpha-2 and two identical beta chains. In terms of tissue distribution, red blood cells.

Involved in oxygen transport from the lung to the various peripheral tissues. This chain is Hemoglobin A subunit alpha-2, found in Aldabrachelys gigantea (Aldabra giant tortoise).